Reading from the N-terminus, the 500-residue chain is Probable malate:quinone oxidoreductase (500 aa).

It belongs to the MQO family. Requires FAD as cofactor.

The enzyme catalyses (S)-malate + a quinone = a quinol + oxaloacetate. The protein operates within carbohydrate metabolism; tricarboxylic acid cycle; oxaloacetate from (S)-malate (quinone route): step 1/1. The sequence is that of Probable malate:quinone oxidoreductase from Bacillus cytotoxicus (strain DSM 22905 / CIP 110041 / 391-98 / NVH 391-98).